A 257-amino-acid polypeptide reads, in one-letter code: Ribonuclease HII (257 aa).

An RNase H type-2 domain is found at 72–257 (TYIAGIDEVG…FAPIKDMIQK (186 aa)). Aspartate 78, glutamate 79, and aspartate 170 together coordinate a divalent metal cation.

It belongs to the RNase HII family. Mn(2+) serves as cofactor. It depends on Mg(2+) as a cofactor.

The protein resides in the cytoplasm. The enzyme catalyses Endonucleolytic cleavage to 5'-phosphomonoester.. Functionally, endonuclease that specifically degrades the RNA of RNA-DNA hybrids. This chain is Ribonuclease HII, found in Bacillus cereus (strain ATCC 14579 / DSM 31 / CCUG 7414 / JCM 2152 / NBRC 15305 / NCIMB 9373 / NCTC 2599 / NRRL B-3711).